Consider the following 128-residue polypeptide: Ribonuclease pancreatic (128 aa).

A disordered region spans residues 1–20 (KETAAMKFQRQHMDSGSSLS). Substrate-binding residues include Lys7 and Arg10. Residue His12 is the Proton acceptor of the active site. 4 disulfide bridges follow: Cys26–Cys84, Cys40–Cys95, Cys58–Cys110, and Cys65–Cys72. The N-linked (GlcNAc...) asparagine glycan is linked to Asn34. Residues 41–45 (KPVNT), Lys66, and Arg85 contribute to the substrate site. His119 functions as the Proton donor in the catalytic mechanism.

The protein belongs to the pancreatic ribonuclease family. As to quaternary structure, monomer. Interacts with and forms tight 1:1 complexes with RNH1. Dimerization of two such complexes may occur. Interaction with RNH1 inhibits this protein. In terms of tissue distribution, pancreas.

Its subcellular location is the secreted. The enzyme catalyses an [RNA] containing cytidine + H2O = an [RNA]-3'-cytidine-3'-phosphate + a 5'-hydroxy-ribonucleotide-3'-[RNA].. It catalyses the reaction an [RNA] containing uridine + H2O = an [RNA]-3'-uridine-3'-phosphate + a 5'-hydroxy-ribonucleotide-3'-[RNA].. In terms of biological role, endonuclease that catalyzes the cleavage of RNA on the 3' side of pyrimidine nucleotides. Acts on single-stranded and double-stranded RNA. In Choloepus hoffmanni (Hoffmann's two-fingered sloth), this protein is Ribonuclease pancreatic (RNASE1).